The following is a 169-amino-acid chain: Cytochrome c oxidase subunit 4 isoform 1, mitochondrial (169 aa).

Residues 1–22 constitute a mitochondrion transit peptide; that stretch reads MLATRVFSLIGRRAISTSVCVR. The Mitochondrial matrix portion of the chain corresponds to 23–98; sequence AHGSVVKSED…SFAEMNRSTN (76 aa). Lys-29 carries the N6-acetyllysine; alternate modification. At Lys-29 the chain carries N6-succinyllysine; alternate. Lys-53 is modified (N6-acetyllysine). Phosphoserine occurs at positions 56 and 58. At Lys-60 the chain carries N6-acetyllysine; alternate. Position 60 is an N6-succinyllysine; alternate (Lys-60). Residue Lys-67 is modified to N6-acetyllysine. A helical transmembrane segment spans residues 99 to 124; the sequence is EWKTVVGAAMFFIGFTALLLIWEKHY. The Mitochondrial intermembrane segment spans residues 125-169; sequence VYGPIPHTFEEEWVAKQTKRMLDMKVAPIQGFSAKWDYDKNEWKK.

Belongs to the cytochrome c oxidase IV family. Component of the cytochrome c oxidase (complex IV, CIV), a multisubunit enzyme composed of 14 subunits. The complex is composed of a catalytic core of 3 subunits MT-CO1, MT-CO2 and MT-CO3, encoded in the mitochondrial DNA, and 11 supernumerary subunits COX4I1 (or COX4I2), COX5A, COX5B, COX6A2 (or COX6A1), COX6B1 (or COX6B2), COX6C, COX7A1 (or COX7A2), COX7B, COX7C, COX8B and NDUFA4, which are encoded in the nuclear genome. The complex exists as a monomer or a dimer and forms supercomplexes (SCs) in the inner mitochondrial membrane with NADH-ubiquinone oxidoreductase (complex I, CI) and ubiquinol-cytochrome c oxidoreductase (cytochrome b-c1 complex, complex III, CIII), resulting in different assemblies (supercomplex SCI(1)III(2)IV(1) and megacomplex MCI(2)III(2)IV(2)). Interacts with PHB2; the interaction decreases in absence of SPHK2. Interacts with AFG1L. Interacts with ABCB7; this interaction allows the regulation of cellular iron homeostasis and cellular reactive oxygen species (ROS) levels in cardiomyocytes. Interacts with FLVCR2; this interaction occurs in the absence of heme and is disrupted upon heme binding. Interacts with IRGC.

Its subcellular location is the mitochondrion inner membrane. It participates in energy metabolism; oxidative phosphorylation. Its function is as follows. Component of the cytochrome c oxidase, the last enzyme in the mitochondrial electron transport chain which drives oxidative phosphorylation. The respiratory chain contains 3 multisubunit complexes succinate dehydrogenase (complex II, CII), ubiquinol-cytochrome c oxidoreductase (cytochrome b-c1 complex, complex III, CIII) and cytochrome c oxidase (complex IV, CIV), that cooperate to transfer electrons derived from NADH and succinate to molecular oxygen, creating an electrochemical gradient over the inner membrane that drives transmembrane transport and the ATP synthase. Cytochrome c oxidase is the component of the respiratory chain that catalyzes the reduction of oxygen to water. Electrons originating from reduced cytochrome c in the intermembrane space (IMS) are transferred via the dinuclear copper A center (CU(A)) of subunit 2 and heme A of subunit 1 to the active site in subunit 1, a binuclear center (BNC) formed by heme A3 and copper B (CU(B)). The BNC reduces molecular oxygen to 2 water molecules using 4 electrons from cytochrome c in the IMS and 4 protons from the mitochondrial matrix. This chain is Cytochrome c oxidase subunit 4 isoform 1, mitochondrial (COX4I1), found in Bos taurus (Bovine).